Reading from the N-terminus, the 264-residue chain is Thymidylate synthase (264 aa).

Arginine 21 contributes to the dUMP binding site. Histidine 51 lines the (6R)-5,10-methylene-5,6,7,8-tetrahydrofolate pocket. Residue 126–127 (RR) coordinates dUMP. Cysteine 146 (nucleophile) is an active-site residue. DUMP is bound by residues 166–169 (RSCD), asparagine 177, and 207–209 (HLY). Aspartate 169 contacts (6R)-5,10-methylene-5,6,7,8-tetrahydrofolate. Alanine 263 is a (6R)-5,10-methylene-5,6,7,8-tetrahydrofolate binding site.

The protein belongs to the thymidylate synthase family. Bacterial-type ThyA subfamily. In terms of assembly, homodimer.

Its subcellular location is the cytoplasm. It carries out the reaction dUMP + (6R)-5,10-methylene-5,6,7,8-tetrahydrofolate = 7,8-dihydrofolate + dTMP. Its pathway is pyrimidine metabolism; dTTP biosynthesis. In terms of biological role, catalyzes the reductive methylation of 2'-deoxyuridine-5'-monophosphate (dUMP) to 2'-deoxythymidine-5'-monophosphate (dTMP) while utilizing 5,10-methylenetetrahydrofolate (mTHF) as the methyl donor and reductant in the reaction, yielding dihydrofolate (DHF) as a by-product. This enzymatic reaction provides an intracellular de novo source of dTMP, an essential precursor for DNA biosynthesis. The sequence is that of Thymidylate synthase from Aeromonas salmonicida (strain A449).